Here is a 680-residue protein sequence, read N- to C-terminus: E3 ubiquitin-protein ligase Midline-1 (680 aa).

The segment at 10–60 adopts an RING-type zinc-finger fold; the sequence is CPICLELFEDPLLLPCAHSLCFNCAHRILVSHCATNEPVESINAFQCPTCR. Residues Ser92 and Ser96 each carry the phosphoserine modification. 2 B box-type zinc fingers span residues 116–165 and 172–212; these read KVLC…IEPI and GLMC…VAAL. Zn(2+)-binding residues include Cys119, Cys122, Cys134, Cys137, Cys142, Cys145, His150, His159, Cys175, His178, Cys198, and His204. The stretch at 205 to 264 forms a coiled coil; sequence RDHQVAALSERYDKLKQNLESNLTNLIKRNTELETLLAKLIQTCQHVEVNASRQEAKLTE. The COS domain maps to 320–379; that stretch reads LKENDHARFLQTAKNITERVSMATASSQVLIPEINLNDTFDTFALDFSREKKLLECLDYL. One can recognise a Fibronectin type-III domain in the interval 384–494; sequence PPAIREELCT…RSSEPGKLKT (111 aa). Residues 484–498 show a composition bias toward polar residues; the sequence is SRSSEPGKLKTNSQP. 2 disordered regions span residues 484–503 and 516–535; these read SRSSEPGKLKTNSQPFRLDP and NLTVERDESSSKKSHAPERF. Positions 495–672 constitute a B30.2/SPRY domain; the sequence is NSQPFRLDPK…IVTGLPIPDH (178 aa). Positions 516-533 are enriched in basic and acidic residues; that stretch reads NLTVERDESSSKKSHAPE. Phosphoserine is present on Ser524.

The protein belongs to the TRIM/RBCC family. As to quaternary structure, homodimer or heterodimer with MID2. Interacts with IGBP1. Phosphorylated. Ubiquitously expressed in fetus and adult. At 9 dpc-10.5 dpc, highest expression found in frontonasal processes, branchial arches and CNS. From 12.5 dpc to 16.5 dpc, high levels found in rostral part of CNS. At 14.5 dpc, begins to be highly expressed in kidney and lung. At 16.5 dpc, highly expressed in the mucosa of the hindgut and cutaneous region of the stomach.

Its subcellular location is the cytoplasm. The protein resides in the cytoskeleton. The enzyme catalyses S-ubiquitinyl-[E2 ubiquitin-conjugating enzyme]-L-cysteine + [acceptor protein]-L-lysine = [E2 ubiquitin-conjugating enzyme]-L-cysteine + N(6)-ubiquitinyl-[acceptor protein]-L-lysine.. Has E3 ubiquitin ligase activity towards IGBP1, promoting its monoubiquitination, which results in deprotection of the catalytic subunit of protein phosphatase PP2A, and its subsequent degradation by polyubiquitination. In Mus musculus (Mouse), this protein is E3 ubiquitin-protein ligase Midline-1 (Mid1).